A 362-amino-acid polypeptide reads, in one-letter code: Phosphoserine aminotransferase (362 aa).

L-glutamate contacts are provided by Ser9 and Arg42. Pyridoxal 5'-phosphate-binding positions include 76–77, Trp102, Thr153, Asp174, and Gln197; that span reads GR. Residue Lys198 is modified to N6-(pyridoxal phosphate)lysine. 239-240 contacts pyridoxal 5'-phosphate; sequence NT.

Belongs to the class-V pyridoxal-phosphate-dependent aminotransferase family. SerC subfamily. Homodimer. Pyridoxal 5'-phosphate is required as a cofactor.

Its subcellular location is the cytoplasm. The catalysed reaction is O-phospho-L-serine + 2-oxoglutarate = 3-phosphooxypyruvate + L-glutamate. It catalyses the reaction 4-(phosphooxy)-L-threonine + 2-oxoglutarate = (R)-3-hydroxy-2-oxo-4-phosphooxybutanoate + L-glutamate. It participates in amino-acid biosynthesis; L-serine biosynthesis; L-serine from 3-phospho-D-glycerate: step 2/3. It functions in the pathway cofactor biosynthesis; pyridoxine 5'-phosphate biosynthesis; pyridoxine 5'-phosphate from D-erythrose 4-phosphate: step 3/5. Catalyzes the reversible conversion of 3-phosphohydroxypyruvate to phosphoserine and of 3-hydroxy-2-oxo-4-phosphonooxybutanoate to phosphohydroxythreonine. The polypeptide is Phosphoserine aminotransferase (Escherichia coli O139:H28 (strain E24377A / ETEC)).